A 118-amino-acid polypeptide reads, in one-letter code: Small ribosomal subunit protein uS13 (118 aa).

Residues 94–118 (GLPVHGQRTKTNARTRKGPAKSITR) are disordered.

It belongs to the universal ribosomal protein uS13 family. In terms of assembly, part of the 30S ribosomal subunit. Forms a loose heterodimer with protein S19. Forms two bridges to the 50S subunit in the 70S ribosome.

Functionally, located at the top of the head of the 30S subunit, it contacts several helices of the 16S rRNA. In the 70S ribosome it contacts the 23S rRNA (bridge B1a) and protein L5 of the 50S subunit (bridge B1b), connecting the 2 subunits; these bridges are implicated in subunit movement. Contacts the tRNAs in the A and P-sites. The protein is Small ribosomal subunit protein uS13 of Acidithiobacillus ferrooxidans (strain ATCC 23270 / DSM 14882 / CIP 104768 / NCIMB 8455) (Ferrobacillus ferrooxidans (strain ATCC 23270)).